A 454-amino-acid polypeptide reads, in one-letter code: Immediate-early protein ICP-46 homolog (454 aa).

Residues 330–357 (EKDIETIEKYEKTIQELIVELHNLYLKR) adopt a coiled-coil conformation. A disordered region spans residues 428 to 454 (SSPTASLSSLSPPSSNNNSPIRSPIRM).

The protein belongs to the IIV-6 393L family.

This is Immediate-early protein ICP-46 homolog from Invertebrate iridescent virus 6 (IIV-6).